The primary structure comprises 509 residues: Methylthioalkylmalate synthase 1-1, chloroplastic (509 aa).

The transit peptide at 1–55 (MSFSPTYSIVMASPLLTSSQMIPTTGSTVGFRSILPFGSLRLTRPYKKTSLFISY) directs the protein to the chloroplast. Residues 91–365 (VRVYDTTLRD…YTRIDTRQIM (275 aa)) enclose the Pyruvate carboxyltransferase domain. Positions 100, 298, and 300 each coordinate Mn(2+).

It belongs to the alpha-IPM synthase/homocitrate synthase family. Monomer. Mn(2+) serves as cofactor. The cofactor is Co(2+).

Its subcellular location is the plastid. The protein resides in the chloroplast. It carries out the reaction 4-methylsulfanyl-2-oxobutanoate + acetyl-CoA + H2O = 2-(2-methylsulfanyl)ethylmalate + CoA + H(+). It participates in secondary metabolite biosynthesis. Its activity is regulated as follows. Inhibited by EDTA, Cu(2+) and Zn(2+). Its function is as follows. Determines the side chain length of aliphatic glucosinolate structures. Involved in the biosynthesis of glucosinolate derivative natural products such as 6-(methylsulfinyl)hexylisothiocyanate (6-MSITC), a compound found in wasabi with diverse health-promoting properties. Catalyzes the conversion of 4-methylsulfanyl-2-oxobutanoate (4-MTOB) into 2-(2-methylsulfanyl)ethylmalate (2-(2-MT)EM). In Eutrema japonicum (Wasabi plant), this protein is Methylthioalkylmalate synthase 1-1, chloroplastic.